The primary structure comprises 98 residues: NADH-ubiquinone oxidoreductase chain 4L (98 aa).

The next 3 membrane-spanning stretches (helical) occupy residues 1 to 21 (MTLIHMNIFMAFTMSLTGFLM), 29 to 49 (ALLCLEGMILSLFILVTLTVL), and 59 to 79 (MPIILLVFAACEAAIGLALLV).

This sequence belongs to the complex I subunit 4L family. In terms of assembly, core subunit of respiratory chain NADH dehydrogenase (Complex I) which is composed of 45 different subunits.

It localises to the mitochondrion inner membrane. It catalyses the reaction a ubiquinone + NADH + 5 H(+)(in) = a ubiquinol + NAD(+) + 4 H(+)(out). Its function is as follows. Core subunit of the mitochondrial membrane respiratory chain NADH dehydrogenase (Complex I) which catalyzes electron transfer from NADH through the respiratory chain, using ubiquinone as an electron acceptor. Part of the enzyme membrane arm which is embedded in the lipid bilayer and involved in proton translocation. In Inia geoffrensis (Amazon river dolphin), this protein is NADH-ubiquinone oxidoreductase chain 4L (MT-ND4L).